The following is a 273-amino-acid chain: Protein FAM216A (273 aa).

Residues 1 to 47 form a disordered region; sequence MLGQLLPHTARGLGAAEMPGQGPGSDWTERSSSAEPPAVAGTEGGGG.

This sequence belongs to the FAM216 family.

The protein is Protein FAM216A (FAM216A) of Homo sapiens (Human).